Reading from the N-terminus, the 72-residue chain is ATP synthase subunit c (72 aa).

Helical transmembrane passes span 1 to 21 (MSLGVIAAAIAIGLSALGAGI) and 49 to 69 (FIGVALVEALPIIGVVIAFIV).

It belongs to the ATPase C chain family. F-type ATPases have 2 components, F(1) - the catalytic core - and F(0) - the membrane proton channel. F(1) has five subunits: alpha(3), beta(3), gamma(1), delta(1), epsilon(1). F(0) has three main subunits: a(1), b(2) and c(10-14). The alpha and beta chains form an alternating ring which encloses part of the gamma chain. F(1) is attached to F(0) by a central stalk formed by the gamma and epsilon chains, while a peripheral stalk is formed by the delta and b chains.

The protein resides in the cell membrane. Functionally, f(1)F(0) ATP synthase produces ATP from ADP in the presence of a proton or sodium gradient. F-type ATPases consist of two structural domains, F(1) containing the extramembraneous catalytic core and F(0) containing the membrane proton channel, linked together by a central stalk and a peripheral stalk. During catalysis, ATP synthesis in the catalytic domain of F(1) is coupled via a rotary mechanism of the central stalk subunits to proton translocation. Key component of the F(0) channel; it plays a direct role in translocation across the membrane. A homomeric c-ring of between 10-14 subunits forms the central stalk rotor element with the F(1) delta and epsilon subunits. In Bacillus anthracis (strain A0248), this protein is ATP synthase subunit c.